The following is a 117-amino-acid chain: Large ribosomal subunit protein bL20 (117 aa).

This sequence belongs to the bacterial ribosomal protein bL20 family.

In terms of biological role, binds directly to 23S ribosomal RNA and is necessary for the in vitro assembly process of the 50S ribosomal subunit. It is not involved in the protein synthesizing functions of that subunit. The chain is Large ribosomal subunit protein bL20 (rplT) from Synechocystis sp. (strain ATCC 27184 / PCC 6803 / Kazusa).